Reading from the N-terminus, the 199-residue chain is Protein CPL1 (199 aa).

The first 30 residues, 1 to 30 (MFSIPPSVRRLVFLFLIAAPLLSIVLPVAA), serve as a signal peptide directing secretion. Residues 34–58 (GVDPPSKLQPRAPQPSRRMGATKRS) form a disordered region. The N-linked (GlcNAc...) asparagine glycan is linked to asparagine 148.

The protein resides in the secreted. In terms of biological role, virulence factor which promotes fungal virulence by enhancing type 2 inflammation in the mouse host. Likely binds mouse Tlr4 independently of Ly96/Md2 and activates Tlr4 signaling to drive Stat3 phosphorylation in interstitial macrophages, which promotes the initial induction of Arg1/arginase-1 and increases macrophage sensitivity to Il4 signaling. This Cryptococcus neoformans var. grubii serotype A (strain H99 / ATCC 208821 / CBS 10515 / FGSC 9487) (Filobasidiella neoformans var. grubii) protein is Protein CPL1.